A 226-amino-acid chain; its full sequence is Phosphatidylserine decarboxylase proenzyme (226 aa).

The active-site Schiff-base intermediate with substrate; via pyruvic acid is the serine 184. At serine 184 the chain carries Pyruvic acid (Ser); by autocatalysis.

The protein belongs to the phosphatidylserine decarboxylase family. PSD-A subfamily. As to quaternary structure, heterodimer of a large membrane-associated beta subunit and a small pyruvoyl-containing alpha subunit. The cofactor is pyruvate. Is synthesized initially as an inactive proenzyme. Formation of the active enzyme involves a self-maturation process in which the active site pyruvoyl group is generated from an internal serine residue via an autocatalytic post-translational modification. Two non-identical subunits are generated from the proenzyme in this reaction, and the pyruvate is formed at the N-terminus of the alpha chain, which is derived from the carboxyl end of the proenzyme. The post-translation cleavage follows an unusual pathway, termed non-hydrolytic serinolysis, in which the side chain hydroxyl group of the serine supplies its oxygen atom to form the C-terminus of the beta chain, while the remainder of the serine residue undergoes an oxidative deamination to produce ammonia and the pyruvoyl prosthetic group on the alpha chain.

It localises to the cell membrane. It catalyses the reaction a 1,2-diacyl-sn-glycero-3-phospho-L-serine + H(+) = a 1,2-diacyl-sn-glycero-3-phosphoethanolamine + CO2. Its pathway is phospholipid metabolism; phosphatidylethanolamine biosynthesis; phosphatidylethanolamine from CDP-diacylglycerol: step 2/2. Its function is as follows. Catalyzes the formation of phosphatidylethanolamine (PtdEtn) from phosphatidylserine (PtdSer). In Ehrlichia chaffeensis (strain ATCC CRL-10679 / Arkansas), this protein is Phosphatidylserine decarboxylase proenzyme.